The primary structure comprises 493 residues: EGF-containing fibulin-like extracellular matrix protein 1 (493 aa).

An N-terminal signal peptide occupies residues 1–17 (MLQTLFLTMLTLALVKS). The EGF-like 1; atypical domain occupies 26–71 (YTQCTDGYEWDPIRQQCKDIDECDIVPDACKGGMKCVNHYGGYLCL). The EGF-like 2; calcium-binding domain maps to 173–213 (DIDECTSGTHNCRTDQVCINLRGSFTCQCLPGYQKRGEQCV). Intrachain disulfides connect cysteine 177/cysteine 190, cysteine 184/cysteine 199, cysteine 201/cysteine 212, cysteine 218/cysteine 228, cysteine 224/cysteine 237, cysteine 239/cysteine 252, cysteine 258/cysteine 268, cysteine 264/cysteine 277, cysteine 279/cysteine 292, cysteine 298/cysteine 309, cysteine 305/cysteine 318, cysteine 320/cysteine 332, cysteine 338/cysteine 350, cysteine 344/cysteine 359, and cysteine 365/cysteine 377. The EGF-like 3; calcium-binding domain maps to 214 to 253 (DIDECTVPPYCHQRCVNTPGSFYCQCSPGFQLAANNYTCV). Asparagine 249 carries N-linked (GlcNAc...) asparagine glycosylation. The EGF-like 4; calcium-binding domain maps to 254 to 293 (DINECDASNQCAQQCYNILGSFICQCNQGYELSSDRLNCE). The mediates interaction with TIMP3 stretch occupies residues 259–493 (DASNQCAQQC…LTIIVGPFSF (235 aa)). Residues 294–333 (DIDECRTSSYLCQYQCVNEPGKFSCMCPQGYEVVRSRTCQ) enclose the EGF-like 5; calcium-binding domain. An EGF-like 6; calcium-binding domain is found at 334–378 (DINECETTNECREDEMCWNYHGGFRCYPRNPCQDHYVLTSENRCV).

The protein belongs to the fibulin family. As to quaternary structure, interacts with ECM1. Interacts with TIMP3. As to expression, expressed in the eye in the ciliary body, cornea, inner nuclear layer of the retina, and in the optic disk.

It localises to the secreted. The protein resides in the extracellular space. The protein localises to the extracellular matrix. Binds EGFR, the EGF receptor, inducing EGFR autophosphorylation and the activation of downstream signaling pathways. May play a role in cell adhesion and migration. May function as a negative regulator of chondrocyte differentiation. In the olfactory epithelium, it may regulate glial cell migration, differentiation and the ability of glial cells to support neuronal neurite outgrowth. The sequence is that of EGF-containing fibulin-like extracellular matrix protein 1 (Efemp1) from Mus musculus (Mouse).